A 213-amino-acid chain; its full sequence is Pyridoxine/pyridoxamine 5'-phosphate oxidase (213 aa).

Substrate-binding positions include 10-13 and Lys68; that span reads REEY. FMN contacts are provided by residues 63–68, 78–79, Lys85, and Gln107; these read RMLLLK and FT. 3 residues coordinate substrate: Tyr125, Arg129, and Ser133. FMN is bound by residues 142-143 and Trp186; that span reads QS. Position 192 to 194 (192 to 194) interacts with substrate; the sequence is RLH. An FMN-binding site is contributed by Arg196.

This sequence belongs to the pyridoxamine 5'-phosphate oxidase family. As to quaternary structure, homodimer. FMN is required as a cofactor.

The catalysed reaction is pyridoxamine 5'-phosphate + O2 + H2O = pyridoxal 5'-phosphate + H2O2 + NH4(+). It carries out the reaction pyridoxine 5'-phosphate + O2 = pyridoxal 5'-phosphate + H2O2. Its pathway is cofactor metabolism; pyridoxal 5'-phosphate salvage; pyridoxal 5'-phosphate from pyridoxamine 5'-phosphate: step 1/1. It functions in the pathway cofactor metabolism; pyridoxal 5'-phosphate salvage; pyridoxal 5'-phosphate from pyridoxine 5'-phosphate: step 1/1. Its function is as follows. Catalyzes the oxidation of either pyridoxine 5'-phosphate (PNP) or pyridoxamine 5'-phosphate (PMP) into pyridoxal 5'-phosphate (PLP). This Nocardioides sp. (strain ATCC BAA-499 / JS614) protein is Pyridoxine/pyridoxamine 5'-phosphate oxidase.